Consider the following 308-residue polypeptide: Mitochondrial import receptor subunit TOM40B (308 aa).

Residues 1–29 (MGNTLGLAPMGTLPRRSPRREEPLPNPGS) are disordered. Residues 281 to 308 (PLPVTLALGAFLNHWRNRFHCGFSITVG) form a required for mitochondrial targeting region.

The protein belongs to the Tom40 family. As to quaternary structure, forms part of the preprotein translocase of the outer mitochondrial membrane (TOM complex) containing TOMM22, TOMM40, TOMM40L and TOMM70. Interacts with mitochondrial targeting sequences.

Its subcellular location is the mitochondrion outer membrane. In terms of biological role, potential channel-forming protein implicated in import of protein precursors into mitochondria. The protein is Mitochondrial import receptor subunit TOM40B (TOMM40L) of Homo sapiens (Human).